The chain runs to 261 residues: Cytochrome c oxidase subunit 2 (261 aa).

The Mitochondrial intermembrane segment spans residues 1-34 (MSFTGIFHFFTNSPCDAAEPWQLGSQDAATPMMQ). The helical transmembrane segment at 35 to 55 (GIIDLHHDIFFFLILILVFVS) threads the bilayer. Residues 56–87 (RILVRALWHFHSKKNPIPQRIVHGTTIEILRT) are Mitochondrial matrix-facing. A helical transmembrane segment spans residues 88–108 (IFPSIIPMFIAIPSFALLYSM). Over 109 to 261 (DEVVVDPAMT…NQLIPQTGEA (153 aa)) the chain is Mitochondrial intermembrane. His188, Cys223, Glu225, Cys227, and His231 together coordinate Cu cation. Glu225 is a Mg(2+) binding site.

This sequence belongs to the cytochrome c oxidase subunit 2 family. In terms of assembly, component of the cytochrome c oxidase (complex IV, CIV), a multisubunit enzyme composed of a catalytic core of 3 subunits and several supernumerary subunits. The complex exists as a monomer or a dimer and forms supercomplexes (SCs) in the inner mitochondrial membrane with ubiquinol-cytochrome c oxidoreductase (cytochrome b-c1 complex, complex III, CIII). It depends on Cu cation as a cofactor.

The protein localises to the mitochondrion inner membrane. It catalyses the reaction 4 Fe(II)-[cytochrome c] + O2 + 8 H(+)(in) = 4 Fe(III)-[cytochrome c] + 2 H2O + 4 H(+)(out). Component of the cytochrome c oxidase, the last enzyme in the mitochondrial electron transport chain which drives oxidative phosphorylation. The respiratory chain contains 3 multisubunit complexes succinate dehydrogenase (complex II, CII), ubiquinol-cytochrome c oxidoreductase (cytochrome b-c1 complex, complex III, CIII) and cytochrome c oxidase (complex IV, CIV), that cooperate to transfer electrons derived from NADH and succinate to molecular oxygen, creating an electrochemical gradient over the inner membrane that drives transmembrane transport and the ATP synthase. Cytochrome c oxidase is the component of the respiratory chain that catalyzes the reduction of oxygen to water. Electrons originating from reduced cytochrome c in the intermembrane space (IMS) are transferred via the dinuclear copper A center (CU(A)) of subunit 2 and heme A of subunit 1 to the active site in subunit 1, a binuclear center (BNC) formed by heme A3 and copper B (CU(B)). The BNC reduces molecular oxygen to 2 water molecules using 4 electrons from cytochrome c in the IMS and 4 protons from the mitochondrial matrix. The chain is Cytochrome c oxidase subunit 2 (COX2) from Daucus carota (Wild carrot).